A 431-amino-acid polypeptide reads, in one-letter code: MKETFQVGIIGFGDMGRLYAEYISKAGWRVNVCDRPENYESIQATYGNGGYTVLKDGFQVSRTSDYILYSVEAEHIDKVVALYGPATKVGAIVGGQTSCKAPEMNAFEKYLPEDVDIISCHSMHGPKVNPKSQPLVIIRHRASDEHFEIVNEILSCFKSSVVYLSAKEHDRITADTQAVTHAAFLTMGLAWHANNQYPWEINRWCGGIENIKMNLSMRIYSSKWHVYAGLAILNPEAQRQIQQYASSVTELFKLAISGKAKEYEDRIRNAGKFVFGENMDRNSSGLLLSDELLDQYSISNIPKDESKRNSHLSILAIVDSWSKLGIHPQNHMICSTPLFRLWVGVSEYVFRHPGLLDSCIYTATKHNDFSPDDLEFVVAVRSWSECVAAKDFTTYKKRFLETQEYFRPRFEEATRVGNAMISKLLENLQKM.

5–34 (FQVGIIGFGDMGRLYAEYISKAGWRVNVCD) provides a ligand contact to NADP(+). One can recognise a Prephenate/arogenate dehydrogenase domain in the interval 5–285 (FQVGIIGFGD…GENMDRNSSG (281 aa)).

It belongs to the prephenate/arogenate dehydrogenase family.

It is found in the cytoplasm. The catalysed reaction is prephenate + NADP(+) = 3-(4-hydroxyphenyl)pyruvate + CO2 + NADPH. It participates in amino-acid biosynthesis; L-tyrosine biosynthesis; (4-hydroxyphenyl)pyruvate from prephenate (NADP(+) route): step 1/1. This Schizosaccharomyces pombe (strain 972 / ATCC 24843) (Fission yeast) protein is Probable prephenate dehydrogenase [NADP(+)] (tyr1).